Consider the following 282-residue polypeptide: MSKQEKYAGASALQGLSLGQQSAYISQYSPALLQPVPRSLNRDDLGLTGELPFQGCDVWTLYELSWLNARGKPMVAVGEVSVPAVSANLIESKSFKLYLNSFNQTRCDSLEAVQAMLVKDLSACAGSEVSVTLFPLAQAPHHIAALPGECIDEQDIEVDCYEFDANLLQGAAGNDEVEETLHSHLLKSNCLVTSQPDWGSVVIHYRGPRLDREKLLRYLISFRQHNEFHEQCIERIFTDLKLLCHPSQLTVYARYTRRGGLDINPFRSDWELPPTNLRLIRQ.

Position 90–92 (90–92 (IES)) interacts with substrate. 92-93 (SK) serves as a coordination point for NADPH. Cys-190 acts as the Thioimide intermediate in catalysis. The active-site Proton donor is Asp-197. Residue 229-230 (HE) participates in substrate binding. 258–259 (RG) is a binding site for NADPH.

It belongs to the GTP cyclohydrolase I family. QueF type 2 subfamily. As to quaternary structure, homodimer.

The protein localises to the cytoplasm. The enzyme catalyses 7-aminomethyl-7-carbaguanine + 2 NADP(+) = 7-cyano-7-deazaguanine + 2 NADPH + 3 H(+). It participates in tRNA modification; tRNA-queuosine biosynthesis. Its function is as follows. Catalyzes the NADPH-dependent reduction of 7-cyano-7-deazaguanine (preQ0) to 7-aminomethyl-7-deazaguanine (preQ1). The polypeptide is NADPH-dependent 7-cyano-7-deazaguanine reductase (Aeromonas salmonicida (strain A449)).